Here is a 779-residue protein sequence, read N- to C-terminus: Pleckstrin homology domain-containing family A member 4 (779 aa).

The PH domain occupies 54 to 153; that stretch reads PVHIRGWLHK…WLRALGRASR (100 aa). Disordered stretches follow at residues 152–352, 492–670, and 691–764; these read SRAE…LPGP, AGLG…EGHR, and MTGG…LPQD. Ser164 carries the phosphoserine modification. A compositionally biased stretch (basic and acidic residues) spans 184-193; sequence SRGEEGRISE. Over residues 315 to 332 the composition is skewed to polar residues; that stretch reads QHWSQEPRTQAHSGSPTY. The span at 525–535 shows a compositional bias: low complexity; the sequence is PESLELSSPRS. Over residues 536 to 551 the composition is skewed to basic and acidic residues; it reads PETDWGRPPGGDKDLA. Phosphoserine is present on Ser559. Residues 594–603 show a composition bias toward basic and acidic residues; sequence QLERMRRNQE. A compositionally biased stretch (polar residues) spans 647–663; it reads LRSSGSWSSPRNTTPYL. Residues 704 to 724 are compositionally biased toward pro residues; the sequence is PGVPLPPSDPTRQETPPPRSP.

Highly expressed in melanoma. Detected at low levels in heart, skeletal muscle, kidney, liver and small intestine.

It is found in the cytoplasm. The protein resides in the membrane. Binds specifically to phosphatidylinositol 3-phosphate (PtdIns3P), but not to other phosphoinositides. The sequence is that of Pleckstrin homology domain-containing family A member 4 (PLEKHA4) from Homo sapiens (Human).